Reading from the N-terminus, the 575-residue chain is Acetolactate synthase large subunit (575 aa).

Glutamate 57 lines the thiamine diphosphate pocket. FAD contacts are provided by residues arginine 159, histidine 265–arginine 286, and aspartate 308–aspartate 327. The thiamine pyrophosphate binding stretch occupies residues glutamine 395–serine 475. Aspartate 446 and asparagine 473 together coordinate Mg(2+).

This sequence belongs to the TPP enzyme family. In terms of assembly, dimer of large and small chains. Requires Mg(2+) as cofactor. It depends on thiamine diphosphate as a cofactor.

It catalyses the reaction 2 pyruvate + H(+) = (2S)-2-acetolactate + CO2. The protein operates within amino-acid biosynthesis; L-isoleucine biosynthesis; L-isoleucine from 2-oxobutanoate: step 1/4. Its pathway is amino-acid biosynthesis; L-valine biosynthesis; L-valine from pyruvate: step 1/4. The chain is Acetolactate synthase large subunit (ilvB) from Lactococcus lactis subsp. lactis (strain IL1403) (Streptococcus lactis).